The sequence spans 354 residues: Probable cinnamyl alcohol dehydrogenase 1 (354 aa).

Positions 47, 69, 70, 100, 103, 106, 114, and 163 each coordinate Zn(2+). NADP(+) contacts are provided by residues Thr-167, 188 to 193 (GLGGLG), 211 to 216 (STSESK), Thr-251, and 297 to 299 (SVT).

Belongs to the zinc-containing alcohol dehydrogenase family. As to quaternary structure, homodimer. The cofactor is Zn(2+).

The enzyme catalyses (E)-cinnamyl alcohol + NADP(+) = (E)-cinnamaldehyde + NADPH + H(+). It catalyses the reaction (E)-coniferol + NADP(+) = (E)-coniferaldehyde + NADPH + H(+). The catalysed reaction is (E)-sinapyl alcohol + NADP(+) = (E)-sinapaldehyde + NADPH + H(+). It carries out the reaction (E)-4-coumaroyl alcohol + NADP(+) = (E)-4-coumaraldehyde + NADPH + H(+). The enzyme catalyses (E)-caffeyl alcohol + NADP(+) = (E)-caffeyl aldehyde + NADPH + H(+). The protein operates within aromatic compound metabolism; phenylpropanoid biosynthesis. Its function is as follows. Involved in lignin biosynthesis. Catalyzes the final step specific for the production of lignin monomers. Catalyzes the NADPH-dependent reduction of coniferaldehyde, 5-hydroxyconiferaldehyde, sinapaldehyde, 4-coumaraldehyde and caffeyl aldehyde to their respective alcohols. This Oryza sativa subsp. japonica (Rice) protein is Probable cinnamyl alcohol dehydrogenase 1.